A 439-amino-acid chain; its full sequence is tRNA-2-methylthio-N(6)-dimethylallyladenosine synthase (439 aa).

In terms of domain architecture, MTTase N-terminal spans 2 to 115 (KGLYIKTYGC…LPELIVKASR (114 aa)). Cys11, Cys47, Cys78, Cys155, Cys159, and Cys162 together coordinate [4Fe-4S] cluster. The region spanning 141–372 (NSQGSSAFLA…QKLISKQQLE (232 aa)) is the Radical SAM core domain. The TRAM domain maps to 375–439 (QSMVGKTIPV…QSSLLGCAFH (65 aa)).

It belongs to the methylthiotransferase family. MiaB subfamily. Monomer. Requires [4Fe-4S] cluster as cofactor.

It is found in the cytoplasm. The enzyme catalyses N(6)-dimethylallyladenosine(37) in tRNA + (sulfur carrier)-SH + AH2 + 2 S-adenosyl-L-methionine = 2-methylsulfanyl-N(6)-dimethylallyladenosine(37) in tRNA + (sulfur carrier)-H + 5'-deoxyadenosine + L-methionine + A + S-adenosyl-L-homocysteine + 2 H(+). Its function is as follows. Catalyzes the methylthiolation of N6-(dimethylallyl)adenosine (i(6)A), leading to the formation of 2-methylthio-N6-(dimethylallyl)adenosine (ms(2)i(6)A) at position 37 in tRNAs that read codons beginning with uridine. In Wolbachia pipientis wMel, this protein is tRNA-2-methylthio-N(6)-dimethylallyladenosine synthase.